Here is a 115-residue protein sequence, read N- to C-terminus: Holo-[acyl-carrier-protein] synthase (115 aa).

The Mg(2+) site is built by Asp-6 and Glu-51.

The protein belongs to the P-Pant transferase superfamily. AcpS family. Mg(2+) serves as cofactor.

It is found in the cytoplasm. It catalyses the reaction apo-[ACP] + CoA = holo-[ACP] + adenosine 3',5'-bisphosphate + H(+). Its function is as follows. Transfers the 4'-phosphopantetheine moiety from coenzyme A to a Ser of acyl-carrier-protein. The sequence is that of Holo-[acyl-carrier-protein] synthase from Campylobacter jejuni subsp. jejuni serotype O:2 (strain ATCC 700819 / NCTC 11168).